We begin with the raw amino-acid sequence, 420 residues long: MSSPRDFRAEPVNDYEGNDSEAEDLNFRETLPSSSQENTPRSKVFENKVNSEKVKLSLRNFPHNDYEDVFEEPSESGSDPSMWTARGPFRRDRWSSEDEEAAGPSQALSPLLSDTRKIVSEGELDQLAQIRPLIFNFHEQTAIKDCLKILEEKTAAYDIMQEFMALELKNLPGEFNSGNQPSNREKNRYRDILPYDSTRVPLGKSKDYINASYIRIVNCGEEYFYIATQGPLLSTIDDFWQMVLENNSNVIAMITREIEGGIIKCYHYWPISLKKPLELKHFRVFLENYQILQYFIIRMFQVVEKSTGTSHSVKQLQFTKWPDHGTPASADSFIKYIRYARKSHLTGPMVVHCSAGIGRTGVFLCVDVVFCAIVKNCSFNIMDIVAQMREQRSGMVQTKEQYHFCYDIVLEVLRKLLTLD.

A compositionally biased stretch (basic and acidic residues) spans 1 to 11 (MSSPRDFRAEP). Disordered stretches follow at residues 1 to 47 (MSSP…VFEN) and 68 to 108 (DVFE…SQAL). The segment covering 31-41 (LPSSSQENTPR) has biased composition (polar residues). Phosphoserine is present on residues Ser-76 and Ser-120. In terms of domain architecture, Tyrosine-protein phosphatase spans 159 to 412 (IMQEFMALEL…HFCYDIVLEV (254 aa)). Residues Asp-323, 353-359 (CSAGIGR), and Gln-397 contribute to the substrate site. Catalysis depends on Cys-353, which acts as the Phosphocysteine intermediate.

The protein belongs to the protein-tyrosine phosphatase family. Non-receptor class subfamily. Present in many cell lines (at protein level). Widely expressed.

The protein resides in the nucleus. It localises to the cytoplasm. Its subcellular location is the cytoskeleton. It is found in the microtubule organizing center. The protein localises to the centrosome. It catalyses the reaction O-phospho-L-tyrosyl-[protein] + H2O = L-tyrosyl-[protein] + phosphate. Tyrosine-protein phosphatase targeted to sites of actin polymerization in response of varied extracellular stimuli. Has tyrosine phosphatase activity towards various tyrosyl phosphorylated substrates. The chain is Tyrosine-protein phosphatase non-receptor type 20 from Homo sapiens (Human).